Reading from the N-terminus, the 137-residue chain is Peptide methionine sulfoxide reductase MsrB (137 aa).

A MsrB domain is found at 7 to 129; it reads AEELKKKLSE…NSASLAFSDE (123 aa). Cys-46, Cys-49, Cys-95, and Cys-98 together coordinate Zn(2+). Cys-118 serves as the catalytic Nucleophile.

The protein belongs to the MsrB Met sulfoxide reductase family. It depends on Zn(2+) as a cofactor.

The catalysed reaction is L-methionyl-[protein] + [thioredoxin]-disulfide + H2O = L-methionyl-(R)-S-oxide-[protein] + [thioredoxin]-dithiol. This is Peptide methionine sulfoxide reductase MsrB from Salmonella agona (strain SL483).